The primary structure comprises 102 residues: Spexin prohormone 1 (102 aa).

A signal peptide spans 1–26; it reads MKDLRTLAAYALALLLLATFVSHSWS. Residues 27–35 constitute a propeptide that is removed on maturation; the sequence is APKGSFQRR. Q49 is subject to Glutamine amide. The propeptide occupies 50 to 102; sequence GRRFVSEDRNEGDLYDTIRLESRSQNTENLSISKAAAFLLNILQQARDEDEPY.

It belongs to the spexin family. In terms of tissue distribution, mainly expressed in the brain and ovary. Detected bilaterally in the adult brainstem. Expressed in neurons in the dorsal habenula (dHb). In the dHb some neurons project into the interpeduncular nucleus (IPN) where expression often overlaps with galr2a and galr2b. Weakly expressed in the liver, intestine, kidney, heart and gill.

The protein localises to the secreted. Its subcellular location is the extracellular space. It localises to the cytoplasmic vesicle. It is found in the secretory vesicle. In terms of biological role, plays a role in the regulation of food intake and energy metabolism. May also be involved in suppressing the anxiety response by promoting the expression of serotonin-related genes such as fev, tph2 and slc6a4a. Its function is as follows. Acts as a ligand for galanin receptors galr2a and galr2b. Brain administration of the peptide inhibits food consumption and elevates levels of glucose, triacylglycerol and cholesterol in the serum. Likely to control food intake by regulating appetite related genes which includes the negative regulation of the orexigenic factor agrp. By controlling food intake it may act as a satiety factor in energy metabolism. This chain is Spexin prohormone 1 (spx), found in Danio rerio (Zebrafish).